We begin with the raw amino-acid sequence, 90 residues long: Inactive casein kinase II subunit alpha-2 (90 aa).

ATP contacts are provided by residues 40-48 and Lys-63; that span reads VGRGKYSEV.

This sequence belongs to the protein kinase superfamily. Ser/Thr protein kinase family. CK2 subfamily.

In terms of biological role, the Nipponbare allele of HD6 contains a premature stop codon, resulting in a truncated non-functional product. The protein is Inactive casein kinase II subunit alpha-2 of Oryza sativa subsp. japonica (Rice).